Reading from the N-terminus, the 176-residue chain is MVTIALGSKNPVKISATKEALEILRLNWDLIATDIDSGVDKQPFCDQTYVGARNRALNAIKATNADIGLGIEGGVCNVYGKFIANAVVYVITKEGVENFAISSSFTLPSSIVSLILQGKELGEASDIIFKTINSKTKEGAVGLLTNNIIDRKTLYVQPIILALYPIYNTIINNTLF.

Residue D36 participates in Mg(2+) binding.

Belongs to the YjjX NTPase family. As to quaternary structure, homodimer. The cofactor is Mg(2+). Mn(2+) serves as cofactor.

The enzyme catalyses XTP + H2O = XDP + phosphate + H(+). It catalyses the reaction ITP + H2O = IDP + phosphate + H(+). In terms of biological role, phosphatase that hydrolyzes non-canonical purine nucleotides such as XTP and ITP to their respective diphosphate derivatives. Probably excludes non-canonical purines from DNA/RNA precursor pool, thus preventing their incorporation into DNA/RNA and avoiding chromosomal lesions. This Saccharolobus solfataricus (strain ATCC 35092 / DSM 1617 / JCM 11322 / P2) (Sulfolobus solfataricus) protein is Probable inosine/xanthosine triphosphatase.